A 516-amino-acid polypeptide reads, in one-letter code: Cytochrome P450 1A2 (516 aa).

The O-linked (GlcNAc) serine glycan is linked to S69. F226 is a substrate binding site. C458 is a heme binding site.

The protein belongs to the cytochrome P450 family. In terms of assembly, interacts with PGRMC1; the interaction requires PGRMC1 homodimerization. The cofactor is heme.

It localises to the endoplasmic reticulum membrane. The protein resides in the microsome membrane. The enzyme catalyses an organic molecule + reduced [NADPH--hemoprotein reductase] + O2 = an alcohol + oxidized [NADPH--hemoprotein reductase] + H2O + H(+). It carries out the reaction 17beta-estradiol + reduced [NADPH--hemoprotein reductase] + O2 = 2-hydroxy-17beta-estradiol + oxidized [NADPH--hemoprotein reductase] + H2O + H(+). It catalyses the reaction 17beta-estradiol + reduced [NADPH--hemoprotein reductase] + O2 = 4-hydroxy-17beta-estradiol + oxidized [NADPH--hemoprotein reductase] + H2O + H(+). The catalysed reaction is estrone + reduced [NADPH--hemoprotein reductase] + O2 = 2-hydroxyestrone + oxidized [NADPH--hemoprotein reductase] + H2O + H(+). The enzyme catalyses estrone + reduced [NADPH--hemoprotein reductase] + O2 = 4-hydroxyestrone + oxidized [NADPH--hemoprotein reductase] + H2O + H(+). It carries out the reaction cholesterol + reduced [NADPH--hemoprotein reductase] + O2 = 25-hydroxycholesterol + oxidized [NADPH--hemoprotein reductase] + H2O + H(+). It catalyses the reaction all-trans-retinol + reduced [NADPH--hemoprotein reductase] + O2 = all-trans-retinal + oxidized [NADPH--hemoprotein reductase] + 2 H2O + H(+). The catalysed reaction is all-trans-retinal + reduced [NADPH--hemoprotein reductase] + O2 = all-trans-retinoate + oxidized [NADPH--hemoprotein reductase] + H2O + 2 H(+). The enzyme catalyses (5Z,8Z,11Z,14Z)-eicosatetraenoate + reduced [NADPH--hemoprotein reductase] + O2 = (14R,15S)-epoxy-(5Z,8Z,11Z)-eicosatrienoate + oxidized [NADPH--hemoprotein reductase] + H2O + H(+). It carries out the reaction (5Z,8Z,11Z,14Z)-eicosatetraenoate + reduced [NADPH--hemoprotein reductase] + O2 = (14S,15R)-epoxy-(5Z,8Z,11Z)-eicosatrienoate + oxidized [NADPH--hemoprotein reductase] + H2O + H(+). It catalyses the reaction (5Z,8Z,11Z,14Z,17Z)-eicosapentaenoate + reduced [NADPH--hemoprotein reductase] + O2 = (17R,18S)-epoxy-(5Z,8Z,11Z,14Z)-eicosatetraenoate + oxidized [NADPH--hemoprotein reductase] + H2O + H(+). The catalysed reaction is (4Z,7Z,10Z,13Z,16Z,19Z)-docosahexaenoate + reduced [NADPH--hemoprotein reductase] + O2 = (19R,20S)-epoxy-(4Z,7Z,10Z,13Z,16Z)-docosapentaenoate + oxidized [NADPH--hemoprotein reductase] + H2O + H(+). The enzyme catalyses (5S)-hydroperoxy-(6E,8Z,11Z,14Z)-eicosatetraenoate = 5-oxo-(6E,8Z,11Z,14Z)-eicosatetraenoate + H2O. It carries out the reaction (12S)-hydroperoxy-(5Z,8Z,10E,14Z)-eicosatetraenoate = 12-oxo-(5Z,8Z,10E,14Z)-eicosatetraenoate + H2O. It catalyses the reaction (15S)-hydroperoxy-(5Z,8Z,11Z,13E)-eicosatetraenoate = 15-oxo-(5Z,8Z,11Z,13E)-eicosatetraenoate + H2O. The catalysed reaction is (13S)-hydroperoxy-(9Z,11E)-octadecadienoate = 13-oxo-(9Z,11E)-octadecadienoate + H2O. The enzyme catalyses (5Z,8Z,11Z,14Z)-eicosatetraenoate + reduced [NADPH--hemoprotein reductase] + O2 = 13-hydroxy-(5Z,8Z,11Z,14Z)-eicosatetraenoate + oxidized [NADPH--hemoprotein reductase] + H2O + H(+). It carries out the reaction (5Z,8Z,11Z,14Z)-eicosatetraenoate + reduced [NADPH--hemoprotein reductase] + O2 = 19-hydroxy-(5Z,8Z,11Z,14Z)-eicosatetraenoate + oxidized [NADPH--hemoprotein reductase] + H2O + H(+). It catalyses the reaction (9Z,12Z)-octadecadienoate + reduced [NADPH--hemoprotein reductase] + O2 = 11-hydroxy-(9Z,12Z)-octadecadienoate + oxidized [NADPH--hemoprotein reductase] + H2O + H(+). It participates in cofactor metabolism; retinol metabolism. The protein operates within steroid metabolism; cholesterol metabolism. Its pathway is lipid metabolism; arachidonate metabolism. In terms of biological role, a cytochrome P450 monooxygenase involved in the metabolism of various endogenous substrates, including fatty acids, steroid hormones and vitamins. Mechanistically, uses molecular oxygen inserting one oxygen atom into a substrate, and reducing the second into a water molecule, with two electrons provided by NADPH via cytochrome P450 reductase (NADPH--hemoprotein reductase). Catalyzes the hydroxylation of carbon-hydrogen bonds. Exhibits high catalytic activity for the formation of hydroxyestrogens from estrone (E1) and 17beta-estradiol (E2), namely 2-hydroxy E1 and E2. Metabolizes cholesterol toward 25-hydroxycholesterol, a physiological regulator of cellular cholesterol homeostasis. May act as a major enzyme for all-trans retinoic acid biosynthesis in the liver. Catalyzes two successive oxidative transformation of all-trans retinol to all-trans retinal and then to the active form all-trans retinoic acid. Primarily catalyzes stereoselective epoxidation of the last double bond of polyunsaturated fatty acids (PUFA), displaying a strong preference for the (R,S) stereoisomer. Catalyzes bisallylic hydroxylation and omega-1 hydroxylation of PUFA. May also participate in eicosanoids metabolism by converting hydroperoxide species into oxo metabolites (lipoxygenase-like reaction, NADPH-independent). Plays a role in the oxidative metabolism of xenobiotics. Catalyzes the N-hydroxylation of heterocyclic amines and the O-deethylation of phenacetin. Metabolizes caffeine via N3-demethylation. The chain is Cytochrome P450 1A2 (CYP1A2) from Callithrix jacchus (White-tufted-ear marmoset).